A 298-amino-acid chain; its full sequence is S-adenosylmethionine-dependent nucleotide dehydratase (298 aa).

The region spanning 8 to 235 (ANKELVVNWH…QRFGEIIYAE (228 aa)) is the Radical SAM core domain. Cys-22, Cys-26, and Cys-29 together coordinate [4Fe-4S] cluster.

It belongs to the radical SAM superfamily. Viperin family. Requires [4Fe-4S] cluster as cofactor.

The enzyme catalyses CTP + AH2 + S-adenosyl-L-methionine = 3'-deoxy-3',4'-didehydro-CTP + 5'-deoxyadenosine + L-methionine + A + H2O + H(+). It carries out the reaction UTP + AH2 + S-adenosyl-L-methionine = 3'-deoxy-3',4'-didehydro-UTP + 5'-deoxyadenosine + L-methionine + A + H2O + H(+). Functionally, expression of pVip8 in E.coli (strain MG1655) confers resistance to phages lambda, P1, SECphi8 and T7. Prevents culture collapse upon infection with T7. Catalyzes the conversion of cytidine triphosphate (CTP) to 3'-deoxy-3',4'-didehydro-CTP (ddhCTP) and uridine triphosphate (UTP) to 3'-deoxy-3',4'-didehydro-UTP (ddhUTP), probably via a SAM-dependent radical mechanism. The modified nucleotides repress transcription from T7 RNA polymerase-directed genes (possibly by acting as chain terminators), strongly suggesting these nucleotides block viral polymerase transcription. This chain is S-adenosylmethionine-dependent nucleotide dehydratase, found in Psychrobacter lutiphocae (strain DSM 21542 / CCUG 56590 / IMMIB L-1110).